We begin with the raw amino-acid sequence, 156 residues long: rRNA methyltransferase (156 aa).

Modifies 16S rRNA so making ribosomes resistant to certain aminoglycosides. This chain is rRNA methyltransferase (kamC), found in Saccharopolyspora hirsuta.